We begin with the raw amino-acid sequence, 696 residues long: Translation initiation factor IF-2 (696 aa).

Positions 187–361 (ERPPVVTVMG…EMQEIKGIPD (175 aa)) constitute a tr-type G domain. Residues 196-203 (GHVDHGKT) form a G1 region. 196–203 (GHVDHGKT) contributes to the GTP binding site. The G2 stretch occupies residues 221–225 (GITQS). The segment at 242 to 245 (DTPG) is G3. GTP is bound by residues 242–246 (DTPGH) and 296–299 (NKID). Residues 296–299 (NKID) are G4. A G5 region spans residues 333 to 335 (SAK).

The protein belongs to the TRAFAC class translation factor GTPase superfamily. Classic translation factor GTPase family. IF-2 subfamily.

It is found in the cytoplasm. Its function is as follows. One of the essential components for the initiation of protein synthesis. Protects formylmethionyl-tRNA from spontaneous hydrolysis and promotes its binding to the 30S ribosomal subunits. Also involved in the hydrolysis of GTP during the formation of the 70S ribosomal complex. This Thermosipho africanus (strain TCF52B) protein is Translation initiation factor IF-2.